A 436-amino-acid chain; its full sequence is MRISIFGLGYVGAVCAGCLSGRGHEVVGVDISAAKIDMINQGKSPIVEPGLGELLAEGVKTGRLRGTTNVTEAVLATELSMLCVGTPSKLNGDLELDYIEEVCRQMGSALRDKTERHTVVVRSTVLPGTVHNVVIPILEEFSGKKAGVDFGVAVNPEFLRESTAIKDYNFPPMTVIGELDKASGRRLASIYAELDAPIVRKGIAVAEMIKYTCNVWHATKVTFANEIGNIAKAAGVDGREVMEVVCMDNKLNLSQYYMRPGLAFGGSCLPKDVSALSYRAHLWDIEAPLISSLMRSNAAQVQKAYDMIDKHGSRKVALLGLSFKAGTDDLRESPQLELAEMLIGKGFKLSIFDSNVEYARDHGANGHYIKNEIPHVSALLQSDLDKVVAEADVIVLGNADPRFEKLAKDVPAGKKVIDLVGFMPQRTAGAAEGICW.

6 residues coordinate NAD(+): tyrosine 10, valine 11, aspartate 30, lysine 35, threonine 86, and threonine 124. 9 residues coordinate GDP-alpha-D-mannuronate: glutamate 161, lysine 210, asparagine 214, histidine 217, asparagine 225, tyrosine 256, tyrosine 257, arginine 259, and glycine 265. Cysteine 268 is an active-site residue. Position 271 (lysine 271) interacts with NAD(+). Lysine 324 serves as a coordination point for GDP-alpha-D-mannuronate. Arginine 331 lines the NAD(+) pocket.

It belongs to the UDP-glucose/GDP-mannose dehydrogenase family.

The catalysed reaction is GDP-alpha-D-mannose + 2 NAD(+) + H2O = GDP-alpha-D-mannuronate + 2 NADH + 3 H(+). The protein operates within glycan biosynthesis; alginate biosynthesis. Catalyzes the oxidation of guanosine diphospho-D-mannose (GDP-D-mannose) to GDP-D-mannuronic acid, a precursor for alginate polymerization. The alginate layer causes a mucoid phenotype and is essential for cyst formation. In Azotobacter vinelandii, this protein is GDP-mannose 6-dehydrogenase (algD).